A 269-amino-acid polypeptide reads, in one-letter code: tRNA pseudouridine synthase A (269 aa).

Asp-55 (nucleophile) is an active-site residue. Tyr-111 provides a ligand contact to substrate.

It belongs to the tRNA pseudouridine synthase TruA family.

The enzyme catalyses uridine(38/39/40) in tRNA = pseudouridine(38/39/40) in tRNA. Its function is as follows. Formation of pseudouridine at positions 38, 39 and 40 in the anticodon stem and loop of transfer RNAs. The polypeptide is tRNA pseudouridine synthase A (Methanosarcina mazei (strain ATCC BAA-159 / DSM 3647 / Goe1 / Go1 / JCM 11833 / OCM 88) (Methanosarcina frisia)).